Here is a 601-residue protein sequence, read N- to C-terminus: uncharacterized protein (601 aa).

Helical transmembrane passes span 74-94 (IFFF…VFSI), 104-124 (VSFL…PNDG), and 531-551 (LVLL…NYYY).

Its subcellular location is the endoplasmic reticulum membrane. This is an uncharacterized protein from Schizosaccharomyces pombe (strain 972 / ATCC 24843) (Fission yeast).